A 751-amino-acid polypeptide reads, in one-letter code: Oxysterol-binding protein-related protein 11 (751 aa).

Position 1 is an N-acetylmethionine (Met1). The segment at 1-57 is disordered; the sequence is MQGGEPASVMKVSESEGKLEGLATAVTPNKNSGNSSCGGAISSSSSNSSRGGSAKGW. Ser15 is modified (phosphoserine). Position 27 is a phosphothreonine (Thr27). Residues 31 to 52 show a composition bias toward low complexity; that stretch reads NSGNSSCGGAISSSSSNSSRGG. Residues 63–160 enclose the PH domain; it reads MESVNGYLMK…WVSRLQICTQ (98 aa). 6 positions are modified to phosphoserine: Ser177, Ser179, Ser182, Ser186, Ser189, and Ser194. Disordered regions lie at residues 475–497 and 694–716; these read SGVS…EEAP and EIDK…ERLR.

Belongs to the OSBP family. As to quaternary structure, heterodimer with OSBPL9.

Its subcellular location is the late endosome membrane. It is found in the golgi apparatus. The protein localises to the trans-Golgi network membrane. It carries out the reaction a 1,2-diacyl-sn-glycero-3-phospho-(1D-myo-inositol 4-phosphate)(out) + a 1,2-diacyl-sn-glycero-3-phospho-L-serine(in) = a 1,2-diacyl-sn-glycero-3-phospho-(1D-myo-inositol 4-phosphate)(in) + a 1,2-diacyl-sn-glycero-3-phospho-L-serine(out). In terms of biological role, plays a role in regulating ADIPOQ and FABP4 levels in differentiating adipocytes and is also involved in regulation of adipocyte triglyceride storage. Weakly binds 25-hydroxycholesterol. Interacts with OSBPL9 to function as lipid transfer proteins. Together they form a heterodimer that localizes at the ER-trans-Golgi membrane contact sites, and exchanges phosphatidylserine (1,2-diacyl-sn-glycero-3-phospho-L-serine, PS) for phosphatidylinositol-4-phosphate (1,2-diacyl-sn-glycero-3-phospho-(1D-myo-inositol 4-phosphate), PI(4)P) between the two organelles, a step that is critical for sphingomyelin synthesis in the Golgi complex. This chain is Oxysterol-binding protein-related protein 11 (Osbpl11), found in Mus musculus (Mouse).